An 855-amino-acid polypeptide reads, in one-letter code: Putative AAA family ATPase R476 (855 aa).

Positions 1–13 (MNKRDFSELKNSE) are enriched in basic and acidic residues. Residues 1 to 37 (MNKRDFSELKNSESSEESSLVSSTETVRSSKRNKKFH) are disordered. Over residues 17–27 (ESSLVSSTETV) the composition is skewed to low complexity. ATP is bound at residue 610 to 617 (GPPGTGKT).

This sequence belongs to the AAA ATPase family.

The sequence is that of Putative AAA family ATPase R476 from Acanthamoeba polyphaga mimivirus (APMV).